The sequence spans 117 residues: MDKKSARIRRATRARRKLKELGATRLVVHRTPRHIYAQVIAPNGSEVLVAASTVEKAIAEQLKYTGNKDAAAAVGKAVAERALEKGIKDVSFDRSGFQYHGRVQALADAAREAGLQF.

Belongs to the universal ribosomal protein uL18 family. In terms of assembly, part of the 50S ribosomal subunit; part of the 5S rRNA/L5/L18/L25 subcomplex. Contacts the 5S and 23S rRNAs.

In terms of biological role, this is one of the proteins that bind and probably mediate the attachment of the 5S RNA into the large ribosomal subunit, where it forms part of the central protuberance. This is Large ribosomal subunit protein uL18 from Cronobacter sakazakii (strain ATCC BAA-894) (Enterobacter sakazakii).